The sequence spans 513 residues: 2,3-bisphosphoglycerate-independent phosphoglycerate mutase (513 aa).

The Mn(2+) site is built by Asp12 and Ser62. Ser62 functions as the Phosphoserine intermediate in the catalytic mechanism. Residues His123, Arg153–Asp154, Arg185, Arg191, Arg260–Arg263, and Lys333 each bind substrate. Positions 400, 404, 441, 442, and 460 each coordinate Mn(2+).

This sequence belongs to the BPG-independent phosphoglycerate mutase family. Monomer. It depends on Mn(2+) as a cofactor.

It carries out the reaction (2R)-2-phosphoglycerate = (2R)-3-phosphoglycerate. It functions in the pathway carbohydrate degradation; glycolysis; pyruvate from D-glyceraldehyde 3-phosphate: step 3/5. Its function is as follows. Catalyzes the interconversion of 2-phosphoglycerate and 3-phosphoglycerate. This Clostridium tetani (strain Massachusetts / E88) protein is 2,3-bisphosphoglycerate-independent phosphoglycerate mutase.